The chain runs to 223 residues: Deoxyribose-phosphate aldolase (223 aa).

The active-site Proton donor/acceptor is the D89. Catalysis depends on K152, which acts as the Schiff-base intermediate with acetaldehyde. K181 functions as the Proton donor/acceptor in the catalytic mechanism.

This sequence belongs to the DeoC/FbaB aldolase family. DeoC type 1 subfamily.

The protein resides in the cytoplasm. It carries out the reaction 2-deoxy-D-ribose 5-phosphate = D-glyceraldehyde 3-phosphate + acetaldehyde. Its pathway is carbohydrate degradation; 2-deoxy-D-ribose 1-phosphate degradation; D-glyceraldehyde 3-phosphate and acetaldehyde from 2-deoxy-alpha-D-ribose 1-phosphate: step 2/2. Its function is as follows. Catalyzes a reversible aldol reaction between acetaldehyde and D-glyceraldehyde 3-phosphate to generate 2-deoxy-D-ribose 5-phosphate. The polypeptide is Deoxyribose-phosphate aldolase (Bacillus cereus (strain AH187)).